Consider the following 204-residue polypeptide: Large ribosomal subunit protein eL15 (204 aa).

A disordered region spans residues 161 to 180; sequence MRGLTSAGKKSRGLGKGHKF. Residues 169 to 180 are compositionally biased toward basic residues; that stretch reads KKSRGLGKGHKF.

Belongs to the eukaryotic ribosomal protein eL15 family. Component of the large ribosomal subunit.

Its subcellular location is the cytoplasm. In terms of biological role, component of the large ribosomal subunit. The ribosome is a large ribonucleoprotein complex responsible for the synthesis of proteins in the cell. This Ictalurus punctatus (Channel catfish) protein is Large ribosomal subunit protein eL15 (rpl15).